Consider the following 225-residue polypeptide: Protein-L-isoaspartate O-methyltransferase (225 aa).

S-adenosyl-L-homocysteine contacts are provided by residues Ala-57 to Ser-60, His-65, Ser-89, Glu-110 to His-111, Asp-142 to Gly-143, Thr-216, and Gln-221. Ser-60 is a catalytic residue.

The protein belongs to the methyltransferase superfamily. L-isoaspartyl/D-aspartyl protein methyltransferase family. In terms of assembly, monomer.

It is found in the cytoplasm. The protein resides in the cytosol. It carries out the reaction [protein]-L-isoaspartate + S-adenosyl-L-methionine = [protein]-L-isoaspartate alpha-methyl ester + S-adenosyl-L-homocysteine. In terms of biological role, initiates the repair of damaged proteins by catalyzing methyl esterification of L-isoaspartyl and D-aspartyl residues produced by spontaneous isomerization and racemization of L-aspartyl and L-asparaginyl residues in aging peptides and proteins. This chain is Protein-L-isoaspartate O-methyltransferase (pcm-1), found in Caenorhabditis elegans.